Here is a 525-residue protein sequence, read N- to C-terminus: GMP synthase [glutamine-hydrolyzing] (525 aa).

The Glutamine amidotransferase type-1 domain maps to 8–206 (PLLILDFGSQ…VVDICKASTD (199 aa)). The active-site Nucleophile is C85. Active-site residues include H180 and E182. A GMPS ATP-PPase domain is found at 207 to 400 (WTPEHIIDEA…LGLPHDMVYR (194 aa)). Residue 234 to 240 (SGGVDSS) coordinates ATP.

Homodimer.

The catalysed reaction is XMP + L-glutamine + ATP + H2O = GMP + L-glutamate + AMP + diphosphate + 2 H(+). It functions in the pathway purine metabolism; GMP biosynthesis; GMP from XMP (L-Gln route): step 1/1. Functionally, catalyzes the synthesis of GMP from XMP. In Legionella pneumophila (strain Paris), this protein is GMP synthase [glutamine-hydrolyzing].